Consider the following 340-residue polypeptide: MFMKTDDFDYKLPEELIASYPLENRDASRLLKLNKQTGEIADYKFTDFIDFINPGDLLVFNNSKVMLARLYGSKTTGAKLEYLIERIKTPKLFETHIKANRSPAIGSEIYVEDTLAKVLDKDGGMYLLEIQGDKDIYQLMEEFGHIPLPPYMKRDDEEFDAERYQTVYAQDLGSVAAPTAGLHFSKELMQQIKDKGVDIAYITLHVGSGTFKPVQVDDVESHKMHAEVISVPVEVCQKIRQTKENGGRVIAIGTTSVRSLETAGQNGQIEPYQGETDIFLYPGKKFNVVDAMITNFHLPKSTLIMLVSAFADKEKIIKAYEHAIAERYRFFSYGDAMFIF.

This sequence belongs to the QueA family. Monomer.

Its subcellular location is the cytoplasm. The catalysed reaction is 7-aminomethyl-7-carbaguanosine(34) in tRNA + S-adenosyl-L-methionine = epoxyqueuosine(34) in tRNA + adenine + L-methionine + 2 H(+). Its pathway is tRNA modification; tRNA-queuosine biosynthesis. In terms of biological role, transfers and isomerizes the ribose moiety from AdoMet to the 7-aminomethyl group of 7-deazaguanine (preQ1-tRNA) to give epoxyqueuosine (oQ-tRNA). The chain is S-adenosylmethionine:tRNA ribosyltransferase-isomerase from Francisella tularensis subsp. tularensis (strain FSC 198).